A 442-amino-acid polypeptide reads, in one-letter code: C4-dicarboxylate transport protein (442 aa).

The next 9 helical transmembrane spans lie at 13-33 (VLYF…HFYP), 49-69 (GIKM…IAGM), 81-101 (LALL…LVVV), 149-169 (AFAK…GFAL), 193-213 (MIAI…AFTI), 227-247 (LMGS…GIIA), 312-332 (IYLT…MTLL), 336-356 (TLLA…GSGF), and 357-377 (IVLA…LAII).

This sequence belongs to the dicarboxylate/amino acid:cation symporter (DAACS) (TC 2.A.23) family.

The protein resides in the cell membrane. Its function is as follows. Responsible for the transport of dicarboxylates such as succinate, fumarate, and malate across the membrane. The polypeptide is C4-dicarboxylate transport protein (Polynucleobacter asymbioticus (strain DSM 18221 / CIP 109841 / QLW-P1DMWA-1) (Polynucleobacter necessarius subsp. asymbioticus)).